A 415-amino-acid chain; its full sequence is Actin-like protein 7B (415 aa).

The disordered stretch occupies residues 1–35; the sequence is MATRNSPMALGTAQGDPGEAGTRPGSDAGLRDTGA. At Ser6 the chain carries Phosphoserine.

This sequence belongs to the actin family.

The protein resides in the cytoplasm. It localises to the cytoskeleton. The chain is Actin-like protein 7B (ACTL7B) from Macaca fascicularis (Crab-eating macaque).